The sequence spans 262 residues: Nitrilase (262 aa).

The region spanning 2–237 (VKVAYVQMNP…EEVGVAEIDL (236 aa)) is the CN hydrolase domain. Catalysis depends on Glu42, which acts as the Proton acceptor. Lys113 acts as the Proton donor in catalysis. The active-site Nucleophile is the Cys146. 173-174 (VM) is a substrate binding site.

The protein belongs to the carbon-nitrogen hydrolase superfamily. As to quaternary structure, homodimer.

The catalysed reaction is a nitrile + 2 H2O = a carboxylate + NH4(+). Enzymatic activity is inhibited in the presence of acetone, methanol and metal ions such as Ag(2+) and Hg(2+). Is also inhibited by various thiol reagents such as DTNB, p-chloromercuribenzoate, p-hydroxymercuribenzoate, iodacetamide and iodacetate. EDTA has no influence on activity. In terms of biological role, nitrilase that hydrolyzes preferentially aliphatic nitriles like malononitrile and fumaronitrile in vitro. These dinitriles are converted to the corresponding monoacid mononitriles, showing the enzyme is regioselective. Cannot hydrolyze compounds with a nitrile group bound to an aromatic ring or amino acid. Its biological role is unknown. This Pyrococcus abyssi (strain GE5 / Orsay) protein is Nitrilase.